A 357-amino-acid chain; its full sequence is BLOC-1-related complex subunit 6 (357 aa).

The tract at residues 20–196 is disordered; that stretch reads HQALVFGGGP…SGAGGGRRAT (177 aa). Residues 90 to 99 show a composition bias toward low complexity; that stretch reads GAGSRRGAPG. Residues 138-149 are compositionally biased toward acidic residues; that stretch reads EQQEEEDNDEEA. A compositionally biased stretch (low complexity) spans 150 to 162; the sequence is AAGSRAGRSFSSR. Serine 168 carries the post-translational modification Phosphoserine. Threonine 196 is modified (phosphothreonine). Phosphoserine is present on serine 199. The disordered stretch occupies residues 227-256; that stretch reads LSGAPPPPPSAPARPCPAPAPTPTPAIPPI. The span at 230 to 256 shows a compositional bias: pro residues; it reads APPPPPSAPARPCPAPAPTPTPAIPPI.

This sequence belongs to the BORCS6 family. Component of the BLOC-one-related complex (BORC) which is composed of BLOC1S1, BLOC1S2, BORCS5, BORCS6, BORCS7, BORCS8, KXD1 and SNAPIN.

The protein resides in the lysosome membrane. In terms of biological role, as part of the BORC complex may play a role in lysosomes movement and localization at the cell periphery. Associated with the cytosolic face of lysosomes, the BORC complex may recruit ARL8B and couple lysosomes to microtubule plus-end-directed kinesin motor. This Homo sapiens (Human) protein is BLOC-1-related complex subunit 6.